Here is a 348-residue protein sequence, read N- to C-terminus: D-erythrose-4-phosphate dehydrogenase (348 aa).

NAD(+)-binding positions include 12-13 (RI) and R81. Residues 154–156 (SCT), R200, 213–214 (TK), and R236 contribute to the substrate site. Catalysis depends on C155, which acts as the Nucleophile. N318 contacts NAD(+).

The protein belongs to the glyceraldehyde-3-phosphate dehydrogenase family. Epd subfamily. Homotetramer.

The protein localises to the cytoplasm. The enzyme catalyses D-erythrose 4-phosphate + NAD(+) + H2O = 4-phospho-D-erythronate + NADH + 2 H(+). Its pathway is cofactor biosynthesis; pyridoxine 5'-phosphate biosynthesis; pyridoxine 5'-phosphate from D-erythrose 4-phosphate: step 1/5. Functionally, catalyzes the NAD-dependent conversion of D-erythrose 4-phosphate to 4-phosphoerythronate. The sequence is that of D-erythrose-4-phosphate dehydrogenase from Salmonella paratyphi B (strain ATCC BAA-1250 / SPB7).